We begin with the raw amino-acid sequence, 101 residues long: Thioredoxin 1 (101 aa).

The 100-residue stretch at alanine 2–glycine 101 folds into the Thioredoxin domain. A disulfide bridge links cysteine 25 with cysteine 28.

Belongs to the thioredoxin family.

Functionally, participates in various redox reactions through the reversible oxidation of its active center dithiol to a disulfide and catalyzes dithiol-disulfide exchange reactions. The chain is Thioredoxin 1 (trx1) from Chlorobaculum tepidum (strain ATCC 49652 / DSM 12025 / NBRC 103806 / TLS) (Chlorobium tepidum).